A 516-amino-acid chain; its full sequence is Maturase K (516 aa).

It belongs to the intron maturase 2 family. MatK subfamily.

The protein resides in the plastid. It localises to the chloroplast. Usually encoded in the trnK tRNA gene intron. Probably assists in splicing its own and other chloroplast group II introns. The chain is Maturase K from Chara vulgaris (Common stonewort).